The chain runs to 121 residues: Large ribosomal subunit protein eL18 (121 aa).

Belongs to the eukaryotic ribosomal protein eL18 family.

In Methanoregula boonei (strain DSM 21154 / JCM 14090 / 6A8), this protein is Large ribosomal subunit protein eL18.